The following is a 437-amino-acid chain: Putrescine hydroxycinnamoyltransferase 3 (437 aa).

Active-site proton acceptor residues include His151 and Asp383.

The protein belongs to the plant acyltransferase family. Highly expressed in roots. Expressed at low levels in shoots and flowers.

Its function is as follows. Hydroxycinnamoyl transferase that catalyzes the transfer of an acyl from p-coumaryol-CoA to putrescine, to produce coumaroyl putrescine. Can use feruloyl-CoA and caffeoyl-CoA as acyl donors. The chain is Putrescine hydroxycinnamoyltransferase 3 from Oryza sativa subsp. japonica (Rice).